The following is a 345-amino-acid chain: Phenylalanine--tRNA ligase alpha subunit (345 aa).

Residue Glu255 participates in Mg(2+) binding.

This sequence belongs to the class-II aminoacyl-tRNA synthetase family. Phe-tRNA synthetase alpha subunit type 1 subfamily. As to quaternary structure, tetramer of two alpha and two beta subunits. Requires Mg(2+) as cofactor.

It is found in the cytoplasm. It catalyses the reaction tRNA(Phe) + L-phenylalanine + ATP = L-phenylalanyl-tRNA(Phe) + AMP + diphosphate + H(+). This Lysinibacillus sphaericus (strain C3-41) protein is Phenylalanine--tRNA ligase alpha subunit.